Here is a 707-residue protein sequence, read N- to C-terminus: Acyl-CoA ligase 891, peroxisomal (707 aa).

259–270 (INYTSGTTGPPK) is a binding site for ATP. The interval 525–549 (DGWFRTGDVCTVDAQGRFIIIDRRK) is fatty acid-binding. The Peroxisome targeting signal motif lies at 705–707 (AKL).

Belongs to the ATP-dependent AMP-binding enzyme family.

It localises to the peroxisome matrix. It catalyses the reaction (4E,8E)-10-(4-hydroxy-6-methoxy-7-methyl-3-oxo-1,3-dihydro-2-benzofuran-5-yl)-4,8-dimethyldeca-4,8-dienoate + ATP + CoA = (4E,8E)-10-(4-hydroxy-6-methoxy-7-methyl-3-oxo-1,3-dihydro-2-benzofuran-5-yl)-4,8-dimethyldeca-4,8-dienoyl-CoA + AMP + diphosphate. It participates in secondary metabolite biosynthesis; terpenoid biosynthesis. Functionally, acyl-CoA ligase involved in the biosynthesis of mycophenolic acid (MPA), the first isolated antibiotic natural product in the world obtained from a culture of Penicillium brevicompactum in 1893. The peroxisomal acyl-CoA ligase 891 converts the intermediate MFDHMP-3C into MFDHMP-3C-CoA which impairs its diffusion from the peroxisome. The first step of the pathway is the synthesis of 5-methylorsellinic acid (5MOA) by the cytosolic polyketide synthase mpaC. 5MOA is then converted to the phthalide compound 5,7-dihydroxy-4,6-dimethylphthalide (DHMP) by the endoplasmic reticulum-bound cytochrome P450 monooxygenase mpaDE. MpaDE first catalyzes hydroxylation of 5-MOA to 4,6-dihydroxy-2-(hydroxymethyl)-3-methylbenzoic acid (DHMB). MpaDE then acts as a lactone synthase that catalyzes the ring closure to convert DHMB into DHMP. The next step is the prenylation of DHMP by the Golgi apparatus-associated prenyltransferase mpaA to yield farnesyl-DHMP (FDHMP). The ER-bound oxygenase mpaB then mediates the oxidative cleavage the C19-C20 double bond in FDHMP to yield FDHMP-3C via a mycophenolic aldehyde intermediate. The O-methyltransferase mpaG catalyzes the methylation of FDHMP-3C to yield MFDHMP-3C. After the cytosolic methylation of FDHMP-3C, MFDHMP-3C enters into peroxisomes probably via free diffusion due to its low molecular weight. Upon a peroxisomal CoA ligation reaction, catalyzed by a beta-oxidation component enzyme acyl-CoA ligase ACL891, MFDHMP-3C-CoA would then be restricted to peroxisomes for the following beta-oxidation pathway steps. The peroxisomal beta-oxidation machinery than converts MFDHMP-3C-CoA into MPA_CoA, via a beta-oxidation chain-shortening process. Finally mpaH acts as a peroxisomal acyl-CoA hydrolase with high substrate specificity toward MPA-CoA to release the final product MPA. In Penicillium brevicompactum, this protein is Acyl-CoA ligase 891, peroxisomal.